We begin with the raw amino-acid sequence, 364 residues long: Endopolygalacturonase B (364 aa).

Residues 1 to 20 (MHFLQNSLIAAAMGAALVAA) form the signal peptide. The propeptide occupies 21-29 (APAADLDAR). Cysteines 32 and 47 form a disulfide. Asn138 is a glycosylation site (N-linked (GlcNAc...) asparagine). PbH1 repeat units follow at residues 159–188 (SDHLTISDVTIDNSAGTSKGHNTDAFDIGS), 189–210 (STYITIDGATVYNQDDCIAINS), 211–231 (GEHITFTNGYCSGGHGLSIGS), 240–261 (VKSVTISNSKVVDSQNGVRIKT), 269–291 (VTDVTFQDIELSGITKYGLIVEQ), and 303–348 (TNGV…DITG). Asp203 acts as the Proton donor in catalysis. Cys205 and Cys221 are oxidised to a cystine. Residue His225 is part of the active site. Cystine bridges form between Cys331–Cys336 and Cys355–Cys364.

Belongs to the glycosyl hydrolase 28 family.

It localises to the secreted. It carries out the reaction (1,4-alpha-D-galacturonosyl)n+m + H2O = (1,4-alpha-D-galacturonosyl)n + (1,4-alpha-D-galacturonosyl)m.. Its function is as follows. Involved in maceration and soft-rotting of plant tissue. Hydrolyzes the 1,4-alpha glycosidic bonds of de-esterified pectate in the smooth region of the plant cell wall. This chain is Endopolygalacturonase B (pgaB), found in Emericella nidulans (strain FGSC A4 / ATCC 38163 / CBS 112.46 / NRRL 194 / M139) (Aspergillus nidulans).